Consider the following 222-residue polypeptide: Probable transaldolase (222 aa).

Catalysis depends on K91, which acts as the Schiff-base intermediate with substrate.

It belongs to the transaldolase family. Type 3B subfamily.

The protein resides in the cytoplasm. The catalysed reaction is D-sedoheptulose 7-phosphate + D-glyceraldehyde 3-phosphate = D-erythrose 4-phosphate + beta-D-fructose 6-phosphate. The protein operates within carbohydrate degradation; pentose phosphate pathway; D-glyceraldehyde 3-phosphate and beta-D-fructose 6-phosphate from D-ribose 5-phosphate and D-xylulose 5-phosphate (non-oxidative stage): step 2/3. Functionally, transaldolase is important for the balance of metabolites in the pentose-phosphate pathway. This is Probable transaldolase from Pelodictyon phaeoclathratiforme (strain DSM 5477 / BU-1).